We begin with the raw amino-acid sequence, 372 residues long: Tyrosine--tRNA ligase (372 aa).

The L-tyrosine site is built by Tyr37, Tyr169, Gln173, Asp176, and Gln191. The short motif at 246 to 250 is the 'KMSKS' region element; sequence KMSKS. Lys249 provides a ligand contact to ATP.

The protein belongs to the class-I aminoacyl-tRNA synthetase family. TyrS type 4 subfamily. Homodimer.

It localises to the cytoplasm. The enzyme catalyses tRNA(Tyr) + L-tyrosine + ATP = L-tyrosyl-tRNA(Tyr) + AMP + diphosphate + H(+). Catalyzes the attachment of tyrosine to tRNA(Tyr) in a two-step reaction: tyrosine is first activated by ATP to form Tyr-AMP and then transferred to the acceptor end of tRNA(Tyr). The polypeptide is Tyrosine--tRNA ligase (Pyrobaculum calidifontis (strain DSM 21063 / JCM 11548 / VA1)).